Reading from the N-terminus, the 580-residue chain is PTS system fructose-specific EIIB'BC component (580 aa).

2 consecutive PTS EIIB type-2 domains span residues 3–100 (MKIA…QAAE) and 124–221 (KKIV…NAFA). Active-site phosphocysteine intermediate; for EIIB activity residues include Cys11 and Cys132. Phosphocysteine; by EIIA is present on residues Cys11 and Cys132. In terms of domain architecture, PTS EIIC type-2 spans 244–579 (VYKHLMTGVS…KKSAQAKAVA (336 aa)). Helical transmembrane passes span 254–274 (HMLP…VFGI), 292–312 (GGSA…FSIA), 322–342 (IGGM…VAGF), 367–387 (ILII…YVVG), 408–428 (NAIL…GGPV), 448–468 (MAAI…ATFI), 480–500 (AGKA…IPFA), 507–527 (VIPA…LFGA), and 537–557 (FVLL…AIAV).

It localises to the cell inner membrane. The enzyme catalyses D-fructose(out) + N(pros)-phospho-L-histidyl-[protein] = D-fructose 1-phosphate(in) + L-histidyl-[protein]. In terms of biological role, the phosphoenolpyruvate-dependent sugar phosphotransferase system (sugar PTS), a major carbohydrate active transport system, catalyzes the phosphorylation of incoming sugar substrates concomitantly with their translocation across the cell membrane. The enzyme II FruAB PTS system is involved in fructose transport. The polypeptide is PTS system fructose-specific EIIB'BC component (Vibrio cholerae serotype O1 (strain ATCC 39315 / El Tor Inaba N16961)).